The sequence spans 274 residues: Putative pyruvate, phosphate dikinase regulatory protein (274 aa).

153–160 (GISRTSKT) lines the ADP pocket.

Belongs to the pyruvate, phosphate/water dikinase regulatory protein family. PDRP subfamily.

It catalyses the reaction N(tele)-phospho-L-histidyl/L-threonyl-[pyruvate, phosphate dikinase] + ADP = N(tele)-phospho-L-histidyl/O-phospho-L-threonyl-[pyruvate, phosphate dikinase] + AMP + H(+). The enzyme catalyses N(tele)-phospho-L-histidyl/O-phospho-L-threonyl-[pyruvate, phosphate dikinase] + phosphate + H(+) = N(tele)-phospho-L-histidyl/L-threonyl-[pyruvate, phosphate dikinase] + diphosphate. Functionally, bifunctional serine/threonine kinase and phosphorylase involved in the regulation of the pyruvate, phosphate dikinase (PPDK) by catalyzing its phosphorylation/dephosphorylation. In Bartonella henselae (strain ATCC 49882 / DSM 28221 / CCUG 30454 / Houston 1) (Rochalimaea henselae), this protein is Putative pyruvate, phosphate dikinase regulatory protein.